The primary structure comprises 199 residues: Heparin-binding hemagglutinin (199 aa).

The span at 162-180 (KAAPAKKAAPAKKAAPAKK) shows a compositional bias: low complexity. Positions 162 to 199 (KAAPAKKAAPAKKAAPAKKAAAKKAPAKKAAAKKVTQK) are disordered. The span at 181 to 199 (AAAKKAPAKKAAAKKVTQK) shows a compositional bias: basic residues.

To M.leprae HbhA. In terms of processing, glycosylated. Glycosylation may protect the protein from proteolytic degradation and be important for hemagglutination. It suggests that the carbohydrate moiety may be located within the C-terminal domain of HbhA.

The protein localises to the cell surface. Its function is as follows. Required for extrapulmonary dissemination. Mediates adherence to epithelial cells by binding to sulfated glycoconjugates present at the surface of these cells. This Mycobacterium tuberculosis (strain CDC 1551 / Oshkosh) protein is Heparin-binding hemagglutinin (hbhA).